We begin with the raw amino-acid sequence, 491 residues long: Probable allantoate deiminase (491 aa).

The signal sequence occupies residues 1–32; sequence MALLLSYPRRHPSIHLLILSAYALFLLPILDG. Asn-109 is a glycosylation site (N-linked (GlcNAc...) asparagine). Mn(2+) contacts are provided by His-120, Asp-131, Glu-168, and His-234. N-linked (GlcNAc...) asparagine glycans are attached at residues Asn-265 and Asn-343. His-454 is a Mn(2+) binding site.

This sequence belongs to the peptidase M20A family. Homodimer. It depends on Mn(2+) as a cofactor.

The protein resides in the endoplasmic reticulum. It carries out the reaction allantoate + H2O + 2 H(+) = (S)-2-ureidoglycine + NH4(+) + CO2. Involved in the catabolism of purine nucleotides. The sequential activity of AAH, UGLYAH and UAH allows a complete purine breakdown without the intermediate generation of urea. The sequence is that of Probable allantoate deiminase from Oryza sativa subsp. japonica (Rice).